The primary structure comprises 299 residues: NAD kinase (299 aa).

Asp-71 (proton acceptor) is an active-site residue. NAD(+)-binding positions include 71 to 72 (DG), 145 to 146 (ND), Arg-173, Asp-175, 186 to 191 (TAYALS), Ala-210, and Gln-248.

The protein belongs to the NAD kinase family. Requires a divalent metal cation as cofactor.

The protein localises to the cytoplasm. It carries out the reaction NAD(+) + ATP = ADP + NADP(+) + H(+). Functionally, involved in the regulation of the intracellular balance of NAD and NADP, and is a key enzyme in the biosynthesis of NADP. Catalyzes specifically the phosphorylation on 2'-hydroxyl of the adenosine moiety of NAD to yield NADP. The protein is NAD kinase of Bordetella avium (strain 197N).